The following is a 339-amino-acid chain: Glycerol-3-phosphate dehydrogenase [NAD(P)+] (339 aa).

The NADPH site is built by serine 11, tryptophan 12, and lysine 109. Residues lysine 109, glycine 140, and serine 142 each coordinate sn-glycerol 3-phosphate. An NADPH-binding site is contributed by alanine 144. 5 residues coordinate sn-glycerol 3-phosphate: lysine 195, aspartate 249, serine 259, arginine 260, and asparagine 261. Catalysis depends on lysine 195, which acts as the Proton acceptor. Residue arginine 260 coordinates NADPH. NADPH-binding residues include valine 284 and glutamate 286.

It belongs to the NAD-dependent glycerol-3-phosphate dehydrogenase family.

The protein localises to the cytoplasm. It carries out the reaction sn-glycerol 3-phosphate + NAD(+) = dihydroxyacetone phosphate + NADH + H(+). The catalysed reaction is sn-glycerol 3-phosphate + NADP(+) = dihydroxyacetone phosphate + NADPH + H(+). It functions in the pathway membrane lipid metabolism; glycerophospholipid metabolism. Functionally, catalyzes the reduction of the glycolytic intermediate dihydroxyacetone phosphate (DHAP) to sn-glycerol 3-phosphate (G3P), the key precursor for phospholipid synthesis. The polypeptide is Glycerol-3-phosphate dehydrogenase [NAD(P)+] (Lactobacillus johnsonii (strain CNCM I-12250 / La1 / NCC 533)).